The sequence spans 664 residues: MENERVEREQSQFQEDEFIDSRKPPPWRKQITVRAIVASLLIGIVYSVICLKLNLTTGLVPNLNISSALLAFVFLKSWTKVLQKAGIATTPFTRQENTIAQTCAVACYSISLAGGFASYLLGLNRRTYEETGVNTEGNNPRGIKEPGVGWMTSFLFVTSFIGLVVLVPLRKVMIIDYKLTYPSGTATAVLINGFHTSKGDKTAKKQIRGFIKSFGLSFFWAFFGWFYSGGEKCGFSQFPTFGLQALDKTFYFDFSMTYVGAGMICSHLVNLSLLFGAILSWGIMWPLIARLKGEWFPATLKDNSMQGLNGYKVFICIALILGDGLYNFVKILFFTGRSFHSRLSKTNSISTLVEVPEDSTKESDNLKRENEVFVRESIPLWMACVGYLFFSLVSIIAIPLMFPQLKWYFVLVAYLLAPSLSFCNAYGAGLTDMNMAYNYGKAALFVMAALAGKNDGVVAGMVACGLIKSIVSVSADLMHDFKTGHLTQTSPRSMLVAQAIGTAIGCVVAPLTFFLFYKAFDVGNQNGEYKAPYAMIYRNMAIIGVQGPSALPKHCLELCYGFFAFAVAANLARDLLPDKPGKWIPLPMAMAVPFLVGGSFAIDMCIGSLVVYVWKKVNRKKADVMVPAVASGLICGDGLWILPSSLLALAKVRPPICMNFTAAH.

The next 14 helical transmembrane spans lie at 31–51 (ITVR…VICL), 55–75 (LTTG…FVFL), 103–123 (CAVA…LLGL), 147–167 (GVGW…VVLV), 209–229 (GFIK…FYSG), 268–288 (LVNL…WPLI), 314–334 (FICI…ILFF), 378–398 (IPLW…IIAI), 409–429 (FVLV…YGAG), 457–477 (VVAG…SADL), 496–516 (VAQA…FFLF), 549–569 (SALP…AVAA), 594–614 (FLVG…VYVW), and 629–649 (VASG…LLAL).

This sequence belongs to the YSL (TC 2.A.67.2) family. As to expression, expressed in roots, leaves and weakly in shoots. Restricted to the veins, to the central cylinder of the young roots and to the pericycle and the endodermis cells facing the meta-xylem tubes in older roots. Expressed in the vasculature of sepals, petals, anthers, stigma and siliques, but not in developing seeds or in meristematic zones.

It localises to the cell membrane. Its function is as follows. May be involved in the lateral transport of nicotianamine-chelated metals in the vasculature. The protein is Metal-nicotianamine transporter YSL2 (YSL2) of Arabidopsis thaliana (Mouse-ear cress).